A 545-amino-acid chain; its full sequence is Cytochrome bc1 complex cytochrome b subunit (545 aa).

The chain crosses the membrane as a helical span at residues 54–74; the sequence is VCLYSFIIIILTGVYLTLFFH. His118 and His132 together coordinate heme. Transmembrane regions (helical) follow at residues 122–142, 150–170, and 182–202; these read ALIF…TGAF, WLFG…GYSL, and FMEG…FFLF. Positions 219 and 234 each coordinate heme. A run of 5 helical transmembrane segments spans residues 220-240, 269-289, 335-355, 385-405, and 413-433; these read ILLL…LVFY, AGGF…IATI, LVLG…AIAV, FGVA…NDLW, and INAI…VAFI.

This sequence belongs to the cytochrome b family. The cytochrome bc1 complex is composed of a cytochrome b (QcrB), the Rieske iron-sulfur protein (QcrA) and a diheme cytochrome c (QcrC) subunit. Heme serves as cofactor.

Its subcellular location is the cell membrane. It carries out the reaction a quinol + 2 Fe(III)-[cytochrome c](out) = a quinone + 2 Fe(II)-[cytochrome c](out) + 2 H(+)(out). Its function is as follows. Cytochrome b subunit of the cytochrome bc1 complex, an essential component of the respiratory electron transport chain required for ATP synthesis. The bc1 complex catalyzes the oxidation of ubiquinol and the reduction of cytochrome c in the respiratory chain. The bc1 complex operates through a Q-cycle mechanism that couples electron transfer to generation of the proton gradient that drives ATP synthesis. The cytochrome b subunit contains two ubiquinol reactive sites: the oxidation (QP) site and the reduction (QN) site. This is Cytochrome bc1 complex cytochrome b subunit (qcrB) from Streptomyces coelicolor (strain ATCC BAA-471 / A3(2) / M145).